The following is a 257-amino-acid chain: Ethanolamine ammonia-lyase small subunit (257 aa).

Adenosylcob(III)alamin is bound by residues valine 153, glutamate 174, and cysteine 203.

This sequence belongs to the EutC family. As to quaternary structure, the basic unit is a heterodimer which dimerizes to form tetramers. The heterotetramers trimerize; 6 large subunits form a core ring with 6 small subunits projecting outwards. The cofactor is adenosylcob(III)alamin.

Its subcellular location is the bacterial microcompartment. The enzyme catalyses ethanolamine = acetaldehyde + NH4(+). Its pathway is amine and polyamine degradation; ethanolamine degradation. Its function is as follows. Catalyzes the deamination of various vicinal amino-alcohols to oxo compounds. Allows this organism to utilize ethanolamine as the sole source of nitrogen and carbon in the presence of external vitamin B12. This Rhodococcus erythropolis (Arthrobacter picolinophilus) protein is Ethanolamine ammonia-lyase small subunit.